The sequence spans 89 residues: Small ribosomal subunit protein bS20 (89 aa).

The segment at 1-28 (MTLANIKSAKKRAVQSEKRRQHNASQRS) is disordered.

The protein belongs to the bacterial ribosomal protein bS20 family.

In terms of biological role, binds directly to 16S ribosomal RNA. This is Small ribosomal subunit protein bS20 from Haemophilus ducreyi (strain 35000HP / ATCC 700724).